We begin with the raw amino-acid sequence, 977 residues long: Probable UDP-N-acetylglucosamine--peptide N-acetylglucosaminyltransferase SEC (977 aa).

TPR repeat units follow at residues 2-35 (ISSK…SVSS), 53-86 (DDAR…NPLR), 87-120 (TDNL…QPQF), 121-154 (AECY…RPNF), 155-188 (ADAW…NPLL), 189-222 (VDAH…QPTF), 223-256 (AIAW…KPAF), 257-290 (PDAY…RPNS), 291-324 (AMAF…DPRF), 325-358 (LEAY…QPNH), 359-392 (PQAM…TTGL), 393-426 (SAPF…DPLA), 427-460 (ADAL…RPTM), and 461-494 (AEAH…RPDF). Positions 495–977 (PEATCNLLHT…ENDLEFPHDR (483 aa)) are catalytic region.

It belongs to the glycosyltransferase 41 family. O-GlcNAc transferase subfamily. Interacts with TCP14 and TCP15. Interacts with ATX1.

It catalyses the reaction L-seryl-[protein] + UDP-N-acetyl-alpha-D-glucosamine = 3-O-(N-acetyl-beta-D-glucosaminyl)-L-seryl-[protein] + UDP + H(+). The enzyme catalyses L-threonyl-[protein] + UDP-N-acetyl-alpha-D-glucosamine = 3-O-(N-acetyl-beta-D-glucosaminyl)-L-threonyl-[protein] + UDP + H(+). It functions in the pathway protein modification; protein glycosylation. In terms of biological role, O-linked N-acetylglucosamine transferase (OGT) that mediates O-glycosylation of capsid protein (CP) of virus in case of infection by Plum pox virus. OGTs catalyze the addition of nucleotide-activated sugars directly onto the polypeptide through O-glycosidic linkage with the hydroxyl of serine or threonine. Probably acts by adding O-linked sugars to yet unknown proteins. Its OGT activity has been proved in vitro but not in vivo. Required with SPY for gamete and seed development. Mediates O-glycosylation of the DELLA protein RGA, a repressor of the gibberellin (GA) signaling pathway. O-glycosylation by SEC inhibits RGA binding to four of its interactors PIF3, PIF4, JAZ1, and BZR1 that are key regulators in light, jasmonate, and brassinosteroid signaling pathways, respectively. Activates ATX1 through O-GlcNAc modification to augment ATX1-mediated H3K4me3 histone epigenetic modification at FLC locus, thus preventing premature flowering. The chain is Probable UDP-N-acetylglucosamine--peptide N-acetylglucosaminyltransferase SEC from Arabidopsis thaliana (Mouse-ear cress).